A 368-amino-acid polypeptide reads, in one-letter code: Alkaline phosphatase L (368 aa).

Positions 1–23 (MFKRSLIAASLSVAALVSAQAMA) are cleaved as a signal peptide.

Belongs to the PstS family. As to quaternary structure, homodimer.

It is found in the secreted. The protein localises to the periplasm. It carries out the reaction a phosphate monoester + H2O = an alcohol + phosphate. Functionally, has both a phosphomonoesterase and phosphodiesterase activity. This chain is Alkaline phosphatase L, found in Pseudomonas aeruginosa (strain ATCC 15692 / DSM 22644 / CIP 104116 / JCM 14847 / LMG 12228 / 1C / PRS 101 / PAO1).